Consider the following 1406-residue polypeptide: DNA-directed RNA polymerase subunit beta' (1406 aa).

Residues Cys70, Cys72, Cys85, and Cys88 each contribute to the Zn(2+) site. Residues Asp460, Asp462, and Asp464 each contribute to the Mg(2+) site. Zn(2+)-binding residues include Cys814, Cys888, Cys895, and Cys898.

This sequence belongs to the RNA polymerase beta' chain family. As to quaternary structure, the RNAP catalytic core consists of 2 alpha, 1 beta, 1 beta' and 1 omega subunit. When a sigma factor is associated with the core the holoenzyme is formed, which can initiate transcription. Requires Mg(2+) as cofactor. Zn(2+) is required as a cofactor.

The enzyme catalyses RNA(n) + a ribonucleoside 5'-triphosphate = RNA(n+1) + diphosphate. In terms of biological role, DNA-dependent RNA polymerase catalyzes the transcription of DNA into RNA using the four ribonucleoside triphosphates as substrates. This chain is DNA-directed RNA polymerase subunit beta', found in Yersinia pseudotuberculosis serotype O:1b (strain IP 31758).